A 316-amino-acid polypeptide reads, in one-letter code: Initiation factor TFIIB homolog (316 aa).

The protein belongs to the asfivirus C315R family.

Putative initation factor. The polypeptide is Initiation factor TFIIB homolog (Ornithodoros (relapsing fever ticks)).